Reading from the N-terminus, the 993-residue chain is DNA double-strand break repair Rad50 ATPase (993 aa).

ATP is bound by residues Arg12, 32–38 (NGSGKSS), and Gln133. Coiled-coil stretches lie at residues 192–222 (LENL…LEKL) and 402–493 (EELK…LEKT). The 105-residue stretch at 452-556 (ENELKEKYED…KLNEIDSFKL (105 aa)) folds into the Zinc-hook domain. Cys497 and Cys500 together coordinate Zn(2+). Coiled coils occupy residues 570–612 (KVEE…LEND), 646–677 (DSSK…EINL), and 702–731 (ETEK…VLKN).

Belongs to the SMC family. RAD50 subfamily. In terms of assembly, homodimer. Forms a heterotetramer composed of two Mre11 subunits and two Rad50 subunits. Requires Zn(2+) as cofactor.

Its function is as follows. Part of the Rad50/Mre11 complex, which is involved in the early steps of DNA double-strand break (DSB) repair. The complex may facilitate opening of the processed DNA ends to aid in the recruitment of HerA and NurA. Rad50 controls the balance between DNA end bridging and DNA resection via ATP-dependent structural rearrangements of the Rad50/Mre11 complex. In Methanococcus maripaludis (strain DSM 14266 / JCM 13030 / NBRC 101832 / S2 / LL), this protein is DNA double-strand break repair Rad50 ATPase.